Consider the following 130-residue polypeptide: Large ribosomal subunit protein bL12c (130 aa).

This sequence belongs to the bacterial ribosomal protein bL12 family. In terms of assembly, homodimer. Part of the ribosomal stalk of the 50S ribosomal subunit. Forms a multimeric L10(L12)X complex, where L10 forms an elongated spine to which 2 to 4 L12 dimers bind in a sequential fashion. Binds GTP-bound translation factors.

It localises to the plastid. In terms of biological role, forms part of the ribosomal stalk which helps the ribosome interact with GTP-bound translation factors. Is thus essential for accurate translation. This is Large ribosomal subunit protein bL12c from Prototheca wickerhamii.